The sequence spans 336 residues: Peroxidase 20 (336 aa).

An N-terminal signal peptide occupies residues 1 to 24 (MEIKQKKVWLSLIVLYAITTSVLG). Disulfide bonds link Cys-39-Cys-119, Cys-72-Cys-77, Cys-125-Cys-331, and Cys-204-Cys-239. The active-site Proton acceptor is the His-70. Ca(2+) is bound by residues Asp-71, Val-74, Gly-76, Asp-78, and Ser-80. Position 167 (Pro-167) interacts with substrate. The N-linked (GlcNAc...) asparagine glycan is linked to Asn-170. His-197 is a binding site for heme b. Residue Thr-198 coordinates Ca(2+). The Ca(2+) site is built by Asp-252, Thr-255, and Asp-260.

It belongs to the peroxidase family. Classical plant (class III) peroxidase subfamily. The cofactor is heme b. It depends on Ca(2+) as a cofactor.

The protein localises to the secreted. It catalyses the reaction 2 a phenolic donor + H2O2 = 2 a phenolic radical donor + 2 H2O. Functionally, removal of H(2)O(2), oxidation of toxic reductants, biosynthesis and degradation of lignin, suberization, auxin catabolism, response to environmental stresses such as wounding, pathogen attack and oxidative stress. These functions might be dependent on each isozyme/isoform in each plant tissue. May be implicated in the systemic acquired resistance response via the salicylic acid signal transduction pathway. The polypeptide is Peroxidase 20 (PER20) (Arabidopsis thaliana (Mouse-ear cress)).